Consider the following 638-residue polypeptide: 1-deoxy-D-xylulose-5-phosphate synthase (638 aa).

Thiamine diphosphate is bound by residues H81 and 122–124 (GHS). D153 is a binding site for Mg(2+). Thiamine diphosphate-binding positions include 154 to 155 (GS), N182, Y293, and E377. Position 182 (N182) interacts with Mg(2+).

Belongs to the transketolase family. DXPS subfamily. In terms of assembly, homodimer. It depends on Mg(2+) as a cofactor. Requires thiamine diphosphate as cofactor.

It catalyses the reaction D-glyceraldehyde 3-phosphate + pyruvate + H(+) = 1-deoxy-D-xylulose 5-phosphate + CO2. It functions in the pathway metabolic intermediate biosynthesis; 1-deoxy-D-xylulose 5-phosphate biosynthesis; 1-deoxy-D-xylulose 5-phosphate from D-glyceraldehyde 3-phosphate and pyruvate: step 1/1. Its function is as follows. Catalyzes the acyloin condensation reaction between C atoms 2 and 3 of pyruvate and glyceraldehyde 3-phosphate to yield 1-deoxy-D-xylulose-5-phosphate (DXP). The sequence is that of 1-deoxy-D-xylulose-5-phosphate synthase from Oleidesulfovibrio alaskensis (strain ATCC BAA-1058 / DSM 17464 / G20) (Desulfovibrio alaskensis).